A 381-amino-acid polypeptide reads, in one-letter code: L-lactate dehydrogenase A-like 6B (381 aa).

Residues 101-106 and Arg-148 each bind NAD(+); that span reads DVDEGR. The substrate site is built by Arg-155, Asn-187, and Arg-218. Residue Asn-187 coordinates NAD(+). Catalysis depends on His-242, which acts as the Proton acceptor. Residue Thr-297 coordinates substrate.

Belongs to the LDH/MDH superfamily. LDH family.

The catalysed reaction is (S)-lactate + NAD(+) = pyruvate + NADH + H(+). It participates in fermentation; pyruvate fermentation to lactate; (S)-lactate from pyruvate: step 1/1. This chain is L-lactate dehydrogenase A-like 6B (LDHAL6B), found in Bos taurus (Bovine).